We begin with the raw amino-acid sequence, 256 residues long: Deoxyribose-phosphate aldolase (256 aa).

Residue Asp102 is the Proton donor/acceptor of the active site. The active-site Schiff-base intermediate with acetaldehyde is the Lys165. Catalysis depends on Lys197, which acts as the Proton donor/acceptor.

Belongs to the DeoC/FbaB aldolase family. DeoC type 2 subfamily.

The protein localises to the cytoplasm. It carries out the reaction 2-deoxy-D-ribose 5-phosphate = D-glyceraldehyde 3-phosphate + acetaldehyde. The protein operates within carbohydrate degradation; 2-deoxy-D-ribose 1-phosphate degradation; D-glyceraldehyde 3-phosphate and acetaldehyde from 2-deoxy-alpha-D-ribose 1-phosphate: step 2/2. Functionally, catalyzes a reversible aldol reaction between acetaldehyde and D-glyceraldehyde 3-phosphate to generate 2-deoxy-D-ribose 5-phosphate. This is Deoxyribose-phosphate aldolase from Shewanella baltica (strain OS155 / ATCC BAA-1091).